The primary structure comprises 90 residues: UPF0367 protein SYNPCC7002_A0153 (90 aa).

The protein belongs to the UPF0367 family.

This is UPF0367 protein SYNPCC7002_A0153 from Picosynechococcus sp. (strain ATCC 27264 / PCC 7002 / PR-6) (Agmenellum quadruplicatum).